A 229-amino-acid chain; its full sequence is Demethylmenaquinone methyltransferase (229 aa).

S-adenosyl-L-methionine is bound by residues T58, D78, and 100–101 (DA).

It belongs to the class I-like SAM-binding methyltransferase superfamily. MenG/UbiE family.

The enzyme catalyses a 2-demethylmenaquinol + S-adenosyl-L-methionine = a menaquinol + S-adenosyl-L-homocysteine + H(+). It functions in the pathway quinol/quinone metabolism; menaquinone biosynthesis; menaquinol from 1,4-dihydroxy-2-naphthoate: step 2/2. Functionally, methyltransferase required for the conversion of demethylmenaquinol (DMKH2) to menaquinol (MKH2). This chain is Demethylmenaquinone methyltransferase, found in Thermotoga maritima (strain ATCC 43589 / DSM 3109 / JCM 10099 / NBRC 100826 / MSB8).